The following is a 241-amino-acid chain: Ashwin (241 aa).

Disordered stretches follow at residues 1-21, 82-102, and 212-241; these read MAAQ…SARS, KMME…SVTA, and KRSV…CTWP. Over residues 11-21 the composition is skewed to basic and acidic residues; the sequence is GGKEERVSARS.

Belongs to the ashwin family.

The protein resides in the nucleus. In Gallus gallus (Chicken), this protein is Ashwin.